Reading from the N-terminus, the 245-residue chain is MDDASTLIDVKEYPGTEVQKNRVLTLEEWREKWVDGKIGFHQEQGHQLLKKHLDTFLKGENVLRVFFPLCGKAVEMKWFADRGHCVVGVEISELGIREFFIEQNLSYSEEPIMEIPGAKVFKSSSGNISLYCCNLFDLPRVNIGKFDRIWDRGALVAVNPGDRKCYTDIMLSLTRKGFRYLLAVLSYDPTKHPGPPFYVPDAEIKNLFGSTCNIHCLEKVDVFEERHKSWGIDYIVEKLYLLTEK.

Residue 29 to 40 (WREKWVDGKIGF) coordinates S-adenosyl-L-methionine. F40 provides a ligand contact to substrate. Residue K58 is modified to N6-acetyllysine. S-adenosyl-L-methionine-binding residues include L69, E90, and R152.

The protein belongs to the class I-like SAM-binding methyltransferase superfamily. TPMT family. In terms of assembly, monomer.

Its subcellular location is the cytoplasm. The enzyme catalyses S-adenosyl-L-methionine + a thiopurine = S-adenosyl-L-homocysteine + a thiopurine S-methylether.. The chain is Thiopurine S-methyltransferase (TPMT) from Panthera pardus (Leopard).